Reading from the N-terminus, the 380-residue chain is Forkhead box protein F1 (380 aa).

Positions 1–19 are enriched in polar residues; that stretch reads MTAEVQQPSVQTPAHSSPM. Residues 1 to 49 are disordered; sequence MTAEVQQPSVQTPAHSSPMTEKPVQTPVMETSSSSSSTKAKKTNAGIRR. The fork-head DNA-binding region spans 52-146; the sequence is KPPYSYIALI…EEGSFRRRPR (95 aa).

It is found in the nucleus. The sequence is that of Forkhead box protein F1 (foxf1) from Danio rerio (Zebrafish).